A 317-amino-acid polypeptide reads, in one-letter code: Peptidyl-prolyl cis-trans isomerase CYP26-2, chloroplastic (317 aa).

Residues 1-37 (MMQPNAKLLSPSAKFLPSPIEPPQHNRRTTVGAPPSL) form a disordered region. Residues 95 to 311 (FIDVSIDGEP…SKVVVTNCGL (217 aa)) form the PPIase cyclophilin-type domain.

It belongs to the cyclophilin-type PPIase family. Ubiquitous. Lower levels of expression in roots.

It is found in the plastid. It localises to the chloroplast thylakoid. The enzyme catalyses [protein]-peptidylproline (omega=180) = [protein]-peptidylproline (omega=0). Functionally, PPIases accelerate the folding of proteins. It catalyzes the cis-trans isomerization of proline imidic peptide bonds in oligopeptides. In Arabidopsis thaliana (Mouse-ear cress), this protein is Peptidyl-prolyl cis-trans isomerase CYP26-2, chloroplastic (CYP26-2).